Consider the following 127-residue polypeptide: Holo-[acyl-carrier-protein] synthase (127 aa).

Mg(2+) is bound by residues Asp-9 and Glu-58.

The protein belongs to the P-Pant transferase superfamily. AcpS family. Mg(2+) serves as cofactor.

It is found in the cytoplasm. It carries out the reaction apo-[ACP] + CoA = holo-[ACP] + adenosine 3',5'-bisphosphate + H(+). Its function is as follows. Transfers the 4'-phosphopantetheine moiety from coenzyme A to a Ser of acyl-carrier-protein. The protein is Holo-[acyl-carrier-protein] synthase of Shewanella baltica (strain OS195).